The following is a 282-amino-acid chain: Protease HtpX homolog (282 aa).

2 helical membrane-spanning segments follow: residues 6–26 (TLVLMVFLSVFFIFVGSLIGG) and 29–49 (GATFALIMALGMNFFAYFFSH). Zn(2+) is bound at residue His130. Residue Glu131 is part of the active site. A Zn(2+)-binding site is contributed by His134. Transmembrane regions (helical) follow at residues 140 to 160 (ILISTIAATIAGAISYLAQMA) and 180 to 200 (IVALLMMIIAPLIAMIIQLAI). Residue Glu205 coordinates Zn(2+).

It belongs to the peptidase M48B family. Zn(2+) serves as cofactor.

It localises to the cell inner membrane. The chain is Protease HtpX homolog from Thermodesulfovibrio yellowstonii (strain ATCC 51303 / DSM 11347 / YP87).